The sequence spans 309 residues: Elongation factor Ts (309 aa).

The tract at residues 82–85 (TDFV) is involved in Mg(2+) ion dislocation from EF-Tu.

It belongs to the EF-Ts family.

It is found in the cytoplasm. In terms of biological role, associates with the EF-Tu.GDP complex and induces the exchange of GDP to GTP. It remains bound to the aminoacyl-tRNA.EF-Tu.GTP complex up to the GTP hydrolysis stage on the ribosome. In Rickettsia massiliae (strain Mtu5), this protein is Elongation factor Ts.